Consider the following 76-residue polypeptide: Glutathione S-transferase (76 aa).

The GST N-terminal domain occupies 1-40; it reads XVAFETVPVDLMKGEHKQPAYLALQPFGTVPAVVDGDYXL. The 36-residue stretch at 41–76 folds into the GST C-terminal domain; that stretch reads LSAVLDVYEAHLHGYLAGDFVSLADLAHLPFTDYLV.

It belongs to the GST superfamily. Theta family.

Its subcellular location is the cytoplasm. The enzyme catalyses RX + glutathione = an S-substituted glutathione + a halide anion + H(+). In terms of biological role, conjugation of reduced glutathione to a wide number of exogenous and endogenous hydrophobic electrophiles. In Brassica oleracea var. italica (Broccoli), this protein is Glutathione S-transferase.